The sequence spans 100 residues: MAKKSLIHREKKRQKLEQKYHLIRRSSKKEISKVPSLSDKWKIHGKLQSSPRNSAPTRLHRRCFSTGRPRANYRDFGLSGHILREMVHACLLPGATRSSW.

Belongs to the universal ribosomal protein uS14 family. Part of the 30S ribosomal subunit.

The protein localises to the plastid. It is found in the chloroplast. Binds 16S rRNA, required for the assembly of 30S particles. The chain is Small ribosomal subunit protein uS14c from Carica papaya (Papaya).